An 84-amino-acid chain; its full sequence is Kappa-conotoxin-like Im11.3 (84 aa).

The N-terminal stretch at 1-26 (MMFRLTSVSCFLLVIACLNLFQVVLT) is a signal peptide. 4 disulfides stabilise this stretch: Cys29-Cys43, Cys36-Cys48, Cys42-Cys51, and Cys47-Cys64. A propeptide spanning residues 71-84 (LRPSHPLFLLLPAR) is cleaved from the precursor.

It belongs to the conotoxin I2 superfamily. Expressed by the venom duct.

The protein resides in the secreted. In terms of biological role, inhibits the vertebrate voltage-gated potassium channels Kv1.1/KCNA1 and Kv1.3/KCNA3. The polypeptide is Kappa-conotoxin-like Im11.3 (Conus imperialis (Imperial cone)).